The primary structure comprises 535 residues: Formate--tetrahydrofolate ligase (535 aa).

50 to 57 provides a ligand contact to ATP; the sequence is TPAGEGKT.

It belongs to the formate--tetrahydrofolate ligase family.

The enzyme catalyses (6S)-5,6,7,8-tetrahydrofolate + formate + ATP = (6R)-10-formyltetrahydrofolate + ADP + phosphate. It functions in the pathway one-carbon metabolism; tetrahydrofolate interconversion. This is Formate--tetrahydrofolate ligase from Picrophilus torridus (strain ATCC 700027 / DSM 9790 / JCM 10055 / NBRC 100828 / KAW 2/3).